Reading from the N-terminus, the 418-residue chain is Neurotensin receptor type 1 (418 aa).

Topologically, residues 1–67 are extracellular; sequence MRLNSSAPGT…TDIYSKVLVT (67 aa). N-linked (GlcNAc...) asparagine glycans are attached at residues asparagine 4, asparagine 37, and asparagine 41. The helical transmembrane segment at 68 to 88 threads the bilayer; that stretch reads AVYLALFVVGTVGNTVTAFTL. The Cytoplasmic segment spans residues 89–102; sequence ARKKSLQSLQSTVH. Residues 103–122 form a helical membrane-spanning segment; that stretch reads YHLGSLALSDLLTLLLAMPV. Over 123–142 the chain is Extracellular; it reads ELYNFIWVHHPWAFGDAGCR. Cysteine 141 and cysteine 224 are disulfide-bonded. The chain crosses the membrane as a helical span at residues 143-164; sequence GYYFLRDACTYATALNVASLSV. Topologically, residues 165-184 are cytoplasmic; the sequence is ERYLAICHPFKAKTLMSRSR. Residues 185–205 form a helical membrane-spanning segment; sequence TKKFISAIWLASALLAVPMLF. Over 206 to 234 the chain is Extracellular; it reads TMGEQNRSADGQHAGGLVCTPTIHTATVK. A helical membrane pass occupies residues 235–259; that stretch reads VVIQVNTFMSFIFPMVVISVLNTII. Over 260–303 the chain is Cytoplasmic; the sequence is ANKLTVMVRQAAEQGQVCTVGGEHSTFSMAIEPGRVQALRHGVR. Residues 304-325 traverse the membrane as a helical segment; that stretch reads VLRAVVIAFVVCWLPYHVRRLM. The segment at 321-344 is neurotensin binding; sequence VRRLMFCYISDEQWTPFLYDFYHY. Topologically, residues 326–343 are extracellular; the sequence is FCYISDEQWTPFLYDFYH. Residues 344-364 traverse the membrane as a helical segment; the sequence is YFYMVTNALFYVSSTINPILY. Topologically, residues 365-418 are cytoplasmic; that stretch reads NLVSANFRHIFLATLACLCPVWRRRRKRPAFSRKADSVSSNHTLSSNATRETLY. 2 S-palmitoyl cysteine lipidation sites follow: cysteine 381 and cysteine 383.

This sequence belongs to the G-protein coupled receptor 1 family. Neurotensin receptor subfamily. NTSR1 sub-subfamily. As to quaternary structure, interacts (palmitoylated form) with GNA11. Post-translationally, N-glycosylated. In terms of processing, palmitoylated; this is required for normal localization at membrane rafts and normal GNA11-mediated activation of down-stream signaling cascades. The palmitoylation level increases in response to neurotensin treatment. In terms of tissue distribution, expressed in prostate (at protein level). Detected in colon and peripheral blood mononuclear cells. Detected at very low levels in brain.

It is found in the cell membrane. The protein resides in the membrane raft. G-protein coupled receptor for the tridecapeptide neurotensin (NTS). Signaling is effected via G proteins that activate a phosphatidylinositol-calcium second messenger system. Signaling leads to the activation of downstream MAP kinases and protects cells against apoptosis. The sequence is that of Neurotensin receptor type 1 (NTSR1) from Homo sapiens (Human).